Reading from the N-terminus, the 736-residue chain is MSSESKEPHVLSPKDSFEGNDRYSPPSRIHLELEKKSSTDFKQFEASEPCRPYPRIHMEPQEKSNTNFKQFVIKKLQKSCQCSPTKAKNMIFGFLPVLQWLPKYDLKKNILGDVMSGLIVGILLVPQSIAYSLLAGQEPIYGLYTSFFASLIYFLLGTSRHISVGIFGVLCLMIGEVVDRELLKAGYDTVHIAPSLGMVSNGSTSLNQTSDRICDRSCYAIKVGSTVTFLAGIYQVAMGFFQVGFVSVYLSDALLSGFVTGASFTILTSQAKYLLGLSLPRSSGVGSLITTWIHIFRNIHKTNVCDLITSLLCLLVLLPTKELNEHFKSKLKAPIPTELVVVVAATLASHFGKLHEKYNTSIAGHIPTGFMPPKAPDWNLIPSVAVDAIAISIIGFAITVSLSEMFAKKHGYTVKANQEMYAIGFCNIIPSFFHCFTTSAALAKTLVKESTGCQSQLSGVMTALVLLLVLLVIAPLFYSLQKSVLGVITIVNLRGALRKFRDLPKMWRVSRMDTVIWFVTMLSSALISTELGLLIGVCFSMFCVILRTQKPKVSLLGLVEETEIFESMSAYKNLQARPGIKIFRFVAPLYYINKECFKSALYKKTLNPVLVKAAQKKAAKRKIKKQPVTLSGIQNEISVQLSHDPLELRTIVIDCSAIQFLDTAGIHTLKEVRRDYEAIGIQVLLAQCNPSVRDSLARGEYCKDEEENLLFYSVYEAMAFAEESQNQKGICIPNGL.

Positions 1 to 28 (MSSESKEPHVLSPKDSFEGNDRYSPPSR) are disordered. Residues Ser-12 and Ser-16 each carry the phosphoserine modification. The next 2 membrane-spanning stretches (helical) occupy residues 114–134 (VMSG…YSLL) and 139–159 (PIYG…LGTS). Asn-201 and Asn-207 each carry an N-linked (GlcNAc...) asparagine glycan. 6 consecutive transmembrane segments (helical) span residues 229-249 (FLAG…VSVY), 257-277 (GFVT…LLGL), 380-400 (LIPS…AITV), 422-442 (AIGF…SAAL), 457-477 (LSGV…APLF), and 526-546 (LIST…CVIL). Residues 570–721 (AYKNLQARPG…YSVYEAMAFA (152 aa)) enclose the STAS domain.

It belongs to the SLC26A/SulP transporter (TC 2.A.53) family. N-glycosylated.

The protein localises to the cell membrane. It localises to the apical cell membrane. It carries out the reaction oxalate(in) + sulfate(out) = oxalate(out) + sulfate(in). The enzyme catalyses sulfate(out) + 2 chloride(in) = sulfate(in) + 2 chloride(out). The catalysed reaction is oxalate(out) + 2 chloride(in) = oxalate(in) + 2 chloride(out). It catalyses the reaction bromide(in) + chloride(out) = bromide(out) + chloride(in). It carries out the reaction nitrate(in) + chloride(out) = nitrate(out) + chloride(in). The enzyme catalyses iodide(in) + chloride(out) = iodide(out) + chloride(in). Sulfate transporter which mediates sulfate uptake into chondrocytes in order to maintain adequate sulfation of proteoglycans which is needed for cartilage development. Mediates electroneutral anion exchange of sulfate ions for oxalate ions, sulfate and oxalate ions for chloride and/or hydroxyl ions and chloride ions for bromide, iodide and nitrate ions. The coupling of sulfate transport to both hydroxyl and chloride ions likely serves to ensure transport at both acidic pH when most sulfate uptake is mediated by sulfate-hydroxide exchange and alkaline pH when most sulfate uptake is mediated by sulfate-chloride exchange. Essential for chondrocyte proliferation, differentiation and cell size expansion. This is Sulfate transporter (SLC26A2) from Equus caballus (Horse).